The sequence spans 418 residues: Serine hydroxymethyltransferase (418 aa).

(6S)-5,6,7,8-tetrahydrofolate is bound by residues Leu-121 and 125–127 (GHL). Lys-230 bears the N6-(pyridoxal phosphate)lysine mark. (6S)-5,6,7,8-tetrahydrofolate-binding positions include Glu-246 and 355–357 (SPF).

The protein belongs to the SHMT family. Homodimer. Pyridoxal 5'-phosphate serves as cofactor.

Its subcellular location is the cytoplasm. The catalysed reaction is (6R)-5,10-methylene-5,6,7,8-tetrahydrofolate + glycine + H2O = (6S)-5,6,7,8-tetrahydrofolate + L-serine. It participates in one-carbon metabolism; tetrahydrofolate interconversion. The protein operates within amino-acid biosynthesis; glycine biosynthesis; glycine from L-serine: step 1/1. Functionally, catalyzes the reversible interconversion of serine and glycine with tetrahydrofolate (THF) serving as the one-carbon carrier. This reaction serves as the major source of one-carbon groups required for the biosynthesis of purines, thymidylate, methionine, and other important biomolecules. Also exhibits THF-independent aldolase activity toward beta-hydroxyamino acids, producing glycine and aldehydes, via a retro-aldol mechanism. This chain is Serine hydroxymethyltransferase, found in Streptococcus pneumoniae (strain ATCC 700669 / Spain 23F-1).